Consider the following 461-residue polypeptide: tRNA modification GTPase MnmE (461 aa).

Positions 23, 84, and 123 each coordinate (6S)-5-formyl-5,6,7,8-tetrahydrofolate. A TrmE-type G domain is found at 219 to 382 (GVQVVIGGRP…LLDHLTDTVA (164 aa)). Residues 229–234 (NAGKST), 248–254 (SETPGTT), 273–276 (DTAG), and 337–340 (NKAD) contribute to the GTP site. Residues Ser233 and Thr254 each contribute to the Mg(2+) site. Residue Lys461 participates in (6S)-5-formyl-5,6,7,8-tetrahydrofolate binding.

This sequence belongs to the TRAFAC class TrmE-Era-EngA-EngB-Septin-like GTPase superfamily. TrmE GTPase family. As to quaternary structure, homodimer. Heterotetramer of two MnmE and two MnmG subunits. The cofactor is K(+).

It localises to the cytoplasm. Exhibits a very high intrinsic GTPase hydrolysis rate. Involved in the addition of a carboxymethylaminomethyl (cmnm) group at the wobble position (U34) of certain tRNAs, forming tRNA-cmnm(5)s(2)U34. The chain is tRNA modification GTPase MnmE from Salinibacter ruber (strain DSM 13855 / M31).